The sequence spans 630 residues: Peptidyl-prolyl cis-trans isomerase cyp15 (630 aa).

Positions Met-1–Lys-46 are disordered. WD repeat units lie at residues Met-70–Val-108, Ser-113–Met-152, Tyr-157–His-198, Met-203–Asp-242, and Arg-258–Asp-301. Residues Leu-475–Ile-629 enclose the PPIase cyclophilin-type domain.

It belongs to the cyclophilin-type PPIase family.

It catalyses the reaction [protein]-peptidylproline (omega=180) = [protein]-peptidylproline (omega=0). PPIases accelerate the folding of proteins. It catalyzes the cis-trans isomerization of proline imidic peptide bonds in oligopeptides. The sequence is that of Peptidyl-prolyl cis-trans isomerase cyp15 (cyp15) from Rhizopus delemar (strain RA 99-880 / ATCC MYA-4621 / FGSC 9543 / NRRL 43880) (Mucormycosis agent).